A 572-amino-acid chain; its full sequence is Methionine--tRNA ligase (572 aa).

The 'HIGH' region motif lies at 11–21; that stretch reads PYINGVKHLGN. Residues Cys-143, Cys-146, Cys-156, and Cys-159 each coordinate Zn(2+). A 'KMSKS' region motif is present at residues 341 to 345; the sequence is KFSTS. Thr-344 contacts ATP.

It belongs to the class-I aminoacyl-tRNA synthetase family. MetG type 1 subfamily. Monomer. Zn(2+) is required as a cofactor.

The protein localises to the cytoplasm. The enzyme catalyses tRNA(Met) + L-methionine + ATP = L-methionyl-tRNA(Met) + AMP + diphosphate. Is required not only for elongation of protein synthesis but also for the initiation of all mRNA translation through initiator tRNA(fMet) aminoacylation. This Maricaulis maris (strain MCS10) (Caulobacter maris) protein is Methionine--tRNA ligase.